We begin with the raw amino-acid sequence, 351 residues long: tRNA pseudouridine synthase D (351 aa).

Residue Asp96 is the Nucleophile of the active site. Positions 174–304 constitute a TRUD domain; that stretch reads GAPNYFGPQR…MKPERRPLVA (131 aa). The segment at 244-268 is disordered; that stretch reads VLPGEPEPSGAGPTGPLWGDGGTLA.

The protein belongs to the pseudouridine synthase TruD family.

It catalyses the reaction uridine(13) in tRNA = pseudouridine(13) in tRNA. Functionally, responsible for synthesis of pseudouridine from uracil-13 in transfer RNAs. The protein is tRNA pseudouridine synthase D of Marinobacter nauticus (strain ATCC 700491 / DSM 11845 / VT8) (Marinobacter aquaeolei).